We begin with the raw amino-acid sequence, 348 residues long: Aspartate carbamoyltransferase catalytic subunit (348 aa).

Carbamoyl phosphate-binding residues include arginine 59 and threonine 60. Residue lysine 87 coordinates L-aspartate. Carbamoyl phosphate contacts are provided by arginine 109, histidine 142, and glutamine 145. L-aspartate-binding residues include arginine 182 and arginine 253. Carbamoyl phosphate is bound by residues glycine 294 and proline 295.

The protein belongs to the aspartate/ornithine carbamoyltransferase superfamily. ATCase family. As to quaternary structure, heterododecamer (2C3:3R2) of six catalytic PyrB chains organized as two trimers (C3), and six regulatory PyrI chains organized as three dimers (R2).

It catalyses the reaction carbamoyl phosphate + L-aspartate = N-carbamoyl-L-aspartate + phosphate + H(+). Its pathway is pyrimidine metabolism; UMP biosynthesis via de novo pathway; (S)-dihydroorotate from bicarbonate: step 2/3. In terms of biological role, catalyzes the condensation of carbamoyl phosphate and aspartate to form carbamoyl aspartate and inorganic phosphate, the committed step in the de novo pyrimidine nucleotide biosynthesis pathway. The protein is Aspartate carbamoyltransferase catalytic subunit of Prochlorococcus marinus (strain MIT 9303).